The sequence spans 363 residues: Ribosomal RNA large subunit methyltransferase M (363 aa).

Residues Ser-194, 227–230 (CPGG), Asp-246, Asp-266, and Asp-284 contribute to the S-adenosyl-L-methionine site. Lys-313 acts as the Proton acceptor in catalysis.

Belongs to the class I-like SAM-binding methyltransferase superfamily. RNA methyltransferase RlmE family. RlmM subfamily. In terms of assembly, monomer.

It localises to the cytoplasm. It catalyses the reaction cytidine(2498) in 23S rRNA + S-adenosyl-L-methionine = 2'-O-methylcytidine(2498) in 23S rRNA + S-adenosyl-L-homocysteine + H(+). Functionally, catalyzes the 2'-O-methylation at nucleotide C2498 in 23S rRNA. This chain is Ribosomal RNA large subunit methyltransferase M, found in Haemophilus influenzae (strain 86-028NP).